We begin with the raw amino-acid sequence, 277 residues long: MDKILSGKTVAIDIKGQIKSYTEELKASGKSLKISSILVGDDGGSVYYQNFQEKLANNLGIDFEKIKLDESISEENLKLKIEELNKDDSVNGIMLLLPLPKHIDERVVTNLIDADKDLDCLSEVSVGRFYKGEKCFMPCTPNSVITLLKAYNIEIEGKEVVIIGRSNIVGKPLFQMFLNENATVTVCHSKTKNLKEVCKRADILVVAIGRANFIDSSYVREGAVVIDVGTSEVNGKITGDVNFDDVYEKASLITPVPGGVGSLTTTLLLKNVCKELD.

NADP(+) contacts are provided by residues 164 to 166 (GRS), Ser-189, and Thr-230.

The protein belongs to the tetrahydrofolate dehydrogenase/cyclohydrolase family. As to quaternary structure, homodimer.

It catalyses the reaction (6R)-5,10-methylene-5,6,7,8-tetrahydrofolate + NADP(+) = (6R)-5,10-methenyltetrahydrofolate + NADPH. The catalysed reaction is (6R)-5,10-methenyltetrahydrofolate + H2O = (6R)-10-formyltetrahydrofolate + H(+). The protein operates within one-carbon metabolism; tetrahydrofolate interconversion. Functionally, catalyzes the oxidation of 5,10-methylenetetrahydrofolate to 5,10-methenyltetrahydrofolate and then the hydrolysis of 5,10-methenyltetrahydrofolate to 10-formyltetrahydrofolate. This Clostridium perfringens (strain SM101 / Type A) protein is Bifunctional protein FolD.